A 390-amino-acid polypeptide reads, in one-letter code: Phosphoglycerate kinase (390 aa).

Residues 19 to 21, arginine 34, 57 to 60, arginine 115, and arginine 148 each bind substrate; these read DYN and HLGR. Residues lysine 198, glycine 289, glutamate 320, and 347-350 each bind ATP; that span reads GGDS.

Belongs to the phosphoglycerate kinase family. As to quaternary structure, monomer.

It is found in the cytoplasm. It carries out the reaction (2R)-3-phosphoglycerate + ATP = (2R)-3-phospho-glyceroyl phosphate + ADP. It functions in the pathway carbohydrate degradation; glycolysis; pyruvate from D-glyceraldehyde 3-phosphate: step 2/5. The sequence is that of Phosphoglycerate kinase from Thermus thermophilus (strain ATCC BAA-163 / DSM 7039 / HB27).